Consider the following 287-residue polypeptide: Spore wall protein 7 (287 aa).

Residues 1–19 (MIKGLIYLFLFRCLEGRLA) form the signal peptide.

Belongs to the SWP7 family. In terms of assembly, interacts with SWP9.

It is found in the cytoplasm. The protein resides in the spore wall. It localises to the spore polar tube. Involved in adherence of spores to the host cell surface and in infection efficiency. This is Spore wall protein 7 (SWP7) from Nosema bombycis (strain CQ1 / CVCC 102059) (Microsporidian parasite).